The following is a 211-amino-acid chain: Ribosomal RNA small subunit methyltransferase G (211 aa).

S-adenosyl-L-methionine contacts are provided by residues Gly73, 126–127 (IE), and Arg142.

This sequence belongs to the methyltransferase superfamily. RNA methyltransferase RsmG family.

Its subcellular location is the cytoplasm. The enzyme catalyses guanosine(527) in 16S rRNA + S-adenosyl-L-methionine = N(7)-methylguanosine(527) in 16S rRNA + S-adenosyl-L-homocysteine. In terms of biological role, specifically methylates the N7 position of guanine in position 527 of 16S rRNA. The chain is Ribosomal RNA small subunit methyltransferase G from Methylorubrum populi (strain ATCC BAA-705 / NCIMB 13946 / BJ001) (Methylobacterium populi).